The sequence spans 181 residues: Endoribonuclease YbeY (181 aa).

His-140, His-144, and His-150 together coordinate Zn(2+).

The protein belongs to the endoribonuclease YbeY family. Zn(2+) is required as a cofactor.

Its subcellular location is the cytoplasm. In terms of biological role, single strand-specific metallo-endoribonuclease involved in late-stage 70S ribosome quality control and in maturation of the 3' terminus of the 16S rRNA. In Dinoroseobacter shibae (strain DSM 16493 / NCIMB 14021 / DFL 12), this protein is Endoribonuclease YbeY.